The primary structure comprises 322 residues: Stage V sporulation protein K (322 aa).

99-106 serves as a coordination point for ATP; the sequence is GNPGTGKT.

It belongs to the CbxX/CfxQ family.

The polypeptide is Stage V sporulation protein K (spoVK) (Bacillus subtilis (strain 168)).